The following is a 95-amino-acid chain: Fluoride-specific ion channel FluC 1 (95 aa).

Transmembrane regions (helical) follow at residues 23–43 (LIDA…LMGW), 49–69 (LWGT…LLMF), and 70–90 (DGAY…WLLG). Gly-56 and Thr-59 together coordinate Na(+).

This sequence belongs to the fluoride channel Fluc/FEX (TC 1.A.43) family.

The protein resides in the cell membrane. It catalyses the reaction fluoride(in) = fluoride(out). With respect to regulation, na(+) is not transported, but it plays an essential structural role and its presence is essential for fluoride channel function. In terms of biological role, fluoride-specific ion channel. Important for reducing fluoride concentration in the cell, thus reducing its toxicity. The chain is Fluoride-specific ion channel FluC 1 from Corynebacterium diphtheriae (strain ATCC 700971 / NCTC 13129 / Biotype gravis).